The chain runs to 59 residues: Potassium channel toxin alpha-KTx 4.7 (59 aa).

The signal sequence occupies residues 1–22 (MKAFYGILIIFILISMLDLSQQ). Cystine bridges form between cysteine 29-cysteine 50, cysteine 35-cysteine 55, and cysteine 39-cysteine 57. The tract at residues 48-55 (GKCMNGKC) is interaction with Ca(2+)-activated K(+) channels.

It belongs to the short scorpion toxin superfamily. Potassium channel inhibitor family. Alpha-KTx 04 subfamily. As to expression, expressed by the venom gland.

It is found in the secreted. Its function is as follows. Potently blocks Kv1.1/KCNA1 (85%), Kv1.2/KCNA2 (91%), Kv1.3/KCNA3 (89%), Kv1.6/KCNA6 (94%), and Shaker (97%). This chain is Potassium channel toxin alpha-KTx 4.7, found in Tityus stigmurus (Brazilian scorpion).